Reading from the N-terminus, the 100-residue chain is Large ribosomal subunit protein uL23 (100 aa).

Belongs to the universal ribosomal protein uL23 family. In terms of assembly, part of the 50S ribosomal subunit. Contacts protein L29, and trigger factor when it is bound to the ribosome.

Functionally, one of the early assembly proteins it binds 23S rRNA. One of the proteins that surrounds the polypeptide exit tunnel on the outside of the ribosome. Forms the main docking site for trigger factor binding to the ribosome. This Synechococcus elongatus (strain ATCC 33912 / PCC 7942 / FACHB-805) (Anacystis nidulans R2) protein is Large ribosomal subunit protein uL23.